A 329-amino-acid polypeptide reads, in one-letter code: Ribosome biogenesis regulatory protein homolog (329 aa).

Disordered stretches follow at residues 227-248 (KANI…VSAE) and 262-329 (KKAK…NKRK). The segment covering 278-295 (LREKKEKQEKKGAKEATR) has biased composition (basic and acidic residues). Basic residues predominate over residues 320-329 (AKKKGANKRK).

Belongs to the RRS1 family.

The protein localises to the nucleus. Its subcellular location is the nucleolus. In terms of biological role, involved in ribosomal large subunit assembly. This Caenorhabditis briggsae protein is Ribosome biogenesis regulatory protein homolog.